The following is a 158-amino-acid chain: Protein-export protein SecB (158 aa).

Belongs to the SecB family. In terms of assembly, homotetramer, a dimer of dimers. One homotetramer interacts with 1 SecA dimer.

The protein localises to the cytoplasm. Functionally, one of the proteins required for the normal export of preproteins out of the cell cytoplasm. It is a molecular chaperone that binds to a subset of precursor proteins, maintaining them in a translocation-competent state. It also specifically binds to its receptor SecA. This is Protein-export protein SecB from Rhodopseudomonas palustris (strain BisB5).